The following is a 123-amino-acid chain: Small ribosomal subunit protein uS12 (123 aa).

3-methylthioaspartic acid is present on aspartate 89.

This sequence belongs to the universal ribosomal protein uS12 family. In terms of assembly, part of the 30S ribosomal subunit. Contacts proteins S8 and S17. May interact with IF1 in the 30S initiation complex.

In terms of biological role, with S4 and S5 plays an important role in translational accuracy. Its function is as follows. Interacts with and stabilizes bases of the 16S rRNA that are involved in tRNA selection in the A site and with the mRNA backbone. Located at the interface of the 30S and 50S subunits, it traverses the body of the 30S subunit contacting proteins on the other side and probably holding the rRNA structure together. The combined cluster of proteins S8, S12 and S17 appears to hold together the shoulder and platform of the 30S subunit. In Syntrophus aciditrophicus (strain SB), this protein is Small ribosomal subunit protein uS12.